Consider the following 648-residue polypeptide: Serine/threonine-protein kinase plk-1 (648 aa).

Positions Met1–Glu24 are disordered. The Protein kinase domain maps to Tyr38–Phe289. Residues Leu44 to Cys52 and Lys67 contribute to the ATP site. The Proton acceptor role is filled by Asp161. 2 POLO box domains span residues Trp412–Asp492 and Thr514–Ser596. Residues Pro612–Asn629 show a composition bias toward low complexity.

Belongs to the protein kinase superfamily. Ser/Thr protein kinase family. CDC5/Polo subfamily. As to quaternary structure, interacts with mex-5, mex-6 and spat-1. As to expression, embryos.

Its subcellular location is the cytoplasm. It is found in the cytoskeleton. The protein resides in the microtubule organizing center. The protein localises to the centrosome. It localises to the midbody. Its subcellular location is the nucleus. It is found in the chromosome. The protein resides in the centromere. The protein localises to the kinetochore. The enzyme catalyses L-seryl-[protein] + ATP = O-phospho-L-seryl-[protein] + ADP + H(+). It carries out the reaction L-threonyl-[protein] + ATP = O-phospho-L-threonyl-[protein] + ADP + H(+). Its function is as follows. Required for oocyte nuclear envelope breakdown before entry of oocyte into spermatheca. In meiotic cells, required for spindle dynamics and probably for spindle attachment to the chromosomes. Zygotic role in the development of the germline and nerve cord. In mitotic cells, plays a role in spindle organization and centrosome maturation. Involved in asymmetric nuclear localization of cdc-25.1 during embryogenesis which affects cell division timing. Together with plk-2, regulates cytoplasm polarity in early embryos. May play a minor role in chromosome pairing and synapsis during oocyte meiosis I. This Caenorhabditis elegans protein is Serine/threonine-protein kinase plk-1 (plk-1).